Here is a 155-residue protein sequence, read N- to C-terminus: Protein-export protein SecB (155 aa).

Belongs to the SecB family. Homotetramer, a dimer of dimers. One homotetramer interacts with 1 SecA dimer.

Its subcellular location is the cytoplasm. Its function is as follows. One of the proteins required for the normal export of preproteins out of the cell cytoplasm. It is a molecular chaperone that binds to a subset of precursor proteins, maintaining them in a translocation-competent state. It also specifically binds to its receptor SecA. This Klebsiella pneumoniae subsp. pneumoniae (strain ATCC 700721 / MGH 78578) protein is Protein-export protein SecB.